We begin with the raw amino-acid sequence, 460 residues long: A-type ATP synthase subunit B 1 (460 aa).

Belongs to the ATPase alpha/beta chains family. Has multiple subunits with at least A(3), B(3), C, D, E, F, H, I and proteolipid K(x).

Its subcellular location is the cell membrane. Its function is as follows. Component of the A-type ATP synthase that produces ATP from ADP in the presence of a proton gradient across the membrane. The B chain is a regulatory subunit. This Methanospirillum hungatei JF-1 (strain ATCC 27890 / DSM 864 / NBRC 100397 / JF-1) protein is A-type ATP synthase subunit B 1.